The primary structure comprises 96 residues: Large ribosomal subunit protein eL43 (96 aa).

Residues 41 to 62 (CPVCAFPKLKRAGTSIWVCDKC) form a C4-type zinc finger.

Belongs to the eukaryotic ribosomal protein eL43 family. It depends on Zn(2+) as a cofactor.

In Methanococcus vannielii (strain ATCC 35089 / DSM 1224 / JCM 13029 / OCM 148 / SB), this protein is Large ribosomal subunit protein eL43.